The following is a 309-amino-acid chain: Methionyl-tRNA formyltransferase (309 aa).

Residue 109-112 coordinates (6S)-5,6,7,8-tetrahydrofolate; that stretch reads SLLP.

It belongs to the Fmt family.

The enzyme catalyses L-methionyl-tRNA(fMet) + (6R)-10-formyltetrahydrofolate = N-formyl-L-methionyl-tRNA(fMet) + (6S)-5,6,7,8-tetrahydrofolate + H(+). Attaches a formyl group to the free amino group of methionyl-tRNA(fMet). The formyl group appears to play a dual role in the initiator identity of N-formylmethionyl-tRNA by promoting its recognition by IF2 and preventing the misappropriation of this tRNA by the elongation apparatus. This Clostridium perfringens (strain SM101 / Type A) protein is Methionyl-tRNA formyltransferase.